Consider the following 123-residue polypeptide: Small ribosomal subunit protein uS12 (123 aa).

A 3-methylthioaspartic acid modification is found at aspartate 89.

Belongs to the universal ribosomal protein uS12 family. Part of the 30S ribosomal subunit. Contacts proteins S8 and S17. May interact with IF1 in the 30S initiation complex.

Functionally, with S4 and S5 plays an important role in translational accuracy. In terms of biological role, interacts with and stabilizes bases of the 16S rRNA that are involved in tRNA selection in the A site and with the mRNA backbone. Located at the interface of the 30S and 50S subunits, it traverses the body of the 30S subunit contacting proteins on the other side and probably holding the rRNA structure together. The combined cluster of proteins S8, S12 and S17 appears to hold together the shoulder and platform of the 30S subunit. The chain is Small ribosomal subunit protein uS12 from Desulfovibrio desulfuricans (strain ATCC 27774 / DSM 6949 / MB).